Reading from the N-terminus, the 798-residue chain is Disintegrin and metalloproteinase domain-containing protein B (798 aa).

Positions 1-23 (MKAFSCLLAVIATAASLFQHVDA) are cleaved as a signal peptide. Topologically, residues 24-706 (SHARDKLNNI…VSDWVSRHKP (683 aa)) are extracellular. N-linked (GlcNAc...) asparagine glycosylation is found at N32, N226, N227, N313, and N407. Positions 271 to 510 (KVALIGVVAD…RTILTNCLTT (240 aa)) constitute a Peptidase M12B domain. 3 disulfide bridges follow: C395–C495, C448–C459, and C580–C600. H431 is a binding site for Zn(2+). Residue E432 is part of the active site. Positions 435 and 441 each coordinate Zn(2+). In terms of domain architecture, Disintegrin spans 519–608 (GQQCGNGIVE…DCPHDIHSKD (90 aa)). Residues 707-727 (IVIGVAVGAGCLLLLAIASCI) traverse the membrane as a helical segment. At 728-798 (CGRSRRQRPR…PGHMPPTRYA (71 aa)) the chain is on the cytoplasmic side. The interval 734 to 798 (QRPRNRKMPP…PGHMPPTRYA (65 aa)) is disordered. Residues 775-792 (NNIPPPINAPPPAYPGHM) are compositionally biased toward pro residues.

Requires Zn(2+) as cofactor.

The protein resides in the membrane. Probable zinc protease. The protein is Disintegrin and metalloproteinase domain-containing protein B (ADM-B) of Trichophyton verrucosum (strain HKI 0517).